A 266-amino-acid polypeptide reads, in one-letter code: Bidirectional sugar transporter SWEET7b (266 aa).

Over 1–9 the chain is Extracellular; the sequence is MVSPDLIRN. A helical membrane pass occupies residues 10–30; it reads MVGIVGNIISFGLFLSPVPTF. One can recognise a MtN3/slv 1 domain in the interval 10-97; the sequence is MVGIVGNIIS…TIFFLFSDKK (88 aa). The Cytoplasmic portion of the chain corresponds to 31-45; the sequence is YRIIKNKDVQDFKAD. Residues 46 to 66 form a helical membrane-spanning segment; sequence PYLATLLNCMLWVFYGLPIVH. Residues 67–69 are Extracellular-facing; that stretch reads PNS. The helical transmembrane segment at 70–90 threads the bilayer; the sequence is ILVVTINGIGLIIEAVYLTIF. Over 91 to 101 the chain is Cytoplasmic; sequence FLFSDKKNKKK. A helical membrane pass occupies residues 102-122; it reads MGVVLATEALFMAAVVLGVLL. The Extracellular segment spans residues 123 to 131; sequence GAHTHQRRS. The helical transmembrane segment at 132-152 threads the bilayer; the sequence is LIVGILCAIFGTIMYSSPLTI. Positions 133-216 constitute a MtN3/slv 2 domain; sequence IVGILCAIFG…LILYAIYYRT (84 aa). Residues 153-165 lie on the Cytoplasmic side of the membrane; sequence MSQVVKTKSVEYM. A helical membrane pass occupies residues 166-186; the sequence is PLLLSVVSFLNGLCWTSYALI. Residues 187 to 189 are Extracellular-facing; sequence RLD. The helical transmembrane segment at 190–210 threads the bilayer; that stretch reads IFITIPNGLGVLFALMQLILY. The Cytoplasmic portion of the chain corresponds to 211 to 266; it reads AIYYRTTPKKQDKNLELPTVAPVAKDTSIVTPVSKDDDVVDGGNASHVTINITIEP.

It belongs to the SWEET sugar transporter family. Forms homooligomers and/or heterooligomers.

Its subcellular location is the cell membrane. Mediates both low-affinity uptake and efflux of sugar across the plasma membrane. This is Bidirectional sugar transporter SWEET7b (SWEET7B) from Oryza sativa subsp. indica (Rice).